The primary structure comprises 786 residues: Endonuclease MutS2 (786 aa).

332 to 339 (GPNTGGKT) provides a ligand contact to ATP. The Smr domain occupies 711–786 (IDLRGMDSME…GTGVTVVELK (76 aa)).

The protein belongs to the DNA mismatch repair MutS family. MutS2 subfamily. As to quaternary structure, homodimer. Binds to stalled ribosomes, contacting rRNA.

Endonuclease that is involved in the suppression of homologous recombination and thus may have a key role in the control of bacterial genetic diversity. Functionally, acts as a ribosome collision sensor, splitting the ribosome into its 2 subunits. Detects stalled/collided 70S ribosomes which it binds and splits by an ATP-hydrolysis driven conformational change. Acts upstream of the ribosome quality control system (RQC), a ribosome-associated complex that mediates the extraction of incompletely synthesized nascent chains from stalled ribosomes and their subsequent degradation. Probably generates substrates for RQC. The chain is Endonuclease MutS2 from Clostridium tetani (strain Massachusetts / E88).